A 120-amino-acid polypeptide reads, in one-letter code: NAD(P)H-quinone oxidoreductase subunit 3, chloroplastic (120 aa).

The next 3 helical transmembrane spans lie at 9–29 (IFWAFLIISSLIPILVFFISG), 64–84 (MFALVFVVFDVETVFLYPWAM), and 88–108 (VLGVSVFVEALIFVLILIVGL).

It belongs to the complex I subunit 3 family. As to quaternary structure, NDH is composed of at least 16 different subunits, 5 of which are encoded in the nucleus.

It is found in the plastid. The protein localises to the chloroplast thylakoid membrane. The enzyme catalyses a plastoquinone + NADH + (n+1) H(+)(in) = a plastoquinol + NAD(+) + n H(+)(out). It carries out the reaction a plastoquinone + NADPH + (n+1) H(+)(in) = a plastoquinol + NADP(+) + n H(+)(out). NDH shuttles electrons from NAD(P)H:plastoquinone, via FMN and iron-sulfur (Fe-S) centers, to quinones in the photosynthetic chain and possibly in a chloroplast respiratory chain. The immediate electron acceptor for the enzyme in this species is believed to be plastoquinone. Couples the redox reaction to proton translocation, and thus conserves the redox energy in a proton gradient. This chain is NAD(P)H-quinone oxidoreductase subunit 3, chloroplastic, found in Guizotia abyssinica (Niger).